Consider the following 514-residue polypeptide: Citrate synthase 2, peroxisomal (514 aa).

Catalysis depends on residues His-324, His-363, and Asp-419.

Belongs to the citrate synthase family. As to expression, widely expressed. Expressed throughout the shoot. Expressed in flower, silique, stem, cauline leaf, young leaf, mature leaf and senescent leaf.

It is found in the peroxisome. The catalysed reaction is oxaloacetate + acetyl-CoA + H2O = citrate + CoA + H(+). It participates in carbohydrate metabolism; tricarboxylic acid cycle; isocitrate from oxaloacetate: step 1/2. Peroxisomal citrate synthase required for the fatty acid respiration in seedlings, citrate being exported from peroxisomes into mitochondria during respiration of triacylglycerol (TAG). Indeed, complete respiration requires the transfer of carbon in the form of citrate from the peroxisome to the mitochondria. This Arabidopsis thaliana (Mouse-ear cress) protein is Citrate synthase 2, peroxisomal (CSY2).